A 362-amino-acid polypeptide reads, in one-letter code: N5-carboxyaminoimidazole ribonucleotide synthase (362 aa).

Residues Arg108, Lys148, 153-159 (GYDGKGQ), 185-188 (EGFV), Glu193, His216, and 270-271 (NE) each bind ATP. Positions 112–300 (KQFLNESGIE…QFEQHIRAVA (189 aa)) constitute an ATP-grasp domain.

Belongs to the PurK/PurT family. As to quaternary structure, homodimer.

It carries out the reaction 5-amino-1-(5-phospho-beta-D-ribosyl)imidazole + hydrogencarbonate + ATP = 5-carboxyamino-1-(5-phospho-D-ribosyl)imidazole + ADP + phosphate + 2 H(+). The protein operates within purine metabolism; IMP biosynthesis via de novo pathway; 5-amino-1-(5-phospho-D-ribosyl)imidazole-4-carboxylate from 5-amino-1-(5-phospho-D-ribosyl)imidazole (N5-CAIR route): step 1/2. In terms of biological role, catalyzes the ATP-dependent conversion of 5-aminoimidazole ribonucleotide (AIR) and HCO(3)(-) to N5-carboxyaminoimidazole ribonucleotide (N5-CAIR). This Brucella melitensis biotype 1 (strain ATCC 23456 / CCUG 17765 / NCTC 10094 / 16M) protein is N5-carboxyaminoimidazole ribonucleotide synthase.